The sequence spans 366 residues: Alanine racemase (366 aa).

The Proton acceptor; specific for D-alanine role is filled by Lys-40. An N6-(pyridoxal phosphate)lysine modification is found at Lys-40. Substrate is bound at residue Arg-136. Tyr-263 serves as the catalytic Proton acceptor; specific for L-alanine. Residue Met-310 coordinates substrate.

This sequence belongs to the alanine racemase family. The cofactor is pyridoxal 5'-phosphate.

The catalysed reaction is L-alanine = D-alanine. It functions in the pathway amino-acid biosynthesis; D-alanine biosynthesis; D-alanine from L-alanine: step 1/1. Its function is as follows. Catalyzes the interconversion of L-alanine and D-alanine. May also act on other amino acids. In Streptococcus agalactiae serotype Ia (strain ATCC 27591 / A909 / CDC SS700), this protein is Alanine racemase (alr).